Reading from the N-terminus, the 333-residue chain is Phosphate acyltransferase (333 aa).

The protein belongs to the PlsX family. Homodimer. Probably interacts with PlsY.

It is found in the cytoplasm. It catalyses the reaction a fatty acyl-[ACP] + phosphate = an acyl phosphate + holo-[ACP]. It participates in lipid metabolism; phospholipid metabolism. Its function is as follows. Catalyzes the reversible formation of acyl-phosphate (acyl-PO(4)) from acyl-[acyl-carrier-protein] (acyl-ACP). This enzyme utilizes acyl-ACP as fatty acyl donor, but not acyl-CoA. The protein is Phosphate acyltransferase of Clostridium beijerinckii (strain ATCC 51743 / NCIMB 8052) (Clostridium acetobutylicum).